A 183-amino-acid chain; its full sequence is Ribulose bisphosphate carboxylase small subunit, chloroplastic 1 (183 aa).

Residues 1-58 (MASSMLSNAAMATTAATAGAQASMVAPFNGLKSFATFPITKKSSNDFSSLPSNGGRVQ) constitute a chloroplast transit peptide.

This sequence belongs to the RuBisCO small chain family. As to quaternary structure, heterohexadecamer of 8 large and 8 small subunits.

It is found in the plastid. The protein localises to the chloroplast. In terms of biological role, ruBisCO catalyzes two reactions: the carboxylation of D-ribulose 1,5-bisphosphate, the primary event in carbon dioxide fixation, as well as the oxidative fragmentation of the pentose substrate. Both reactions occur simultaneously and in competition at the same active site. Although the small subunit is not catalytic it is essential for maximal activity. This Amaranthus hypochondriacus (Prince-of-Wales feather) protein is Ribulose bisphosphate carboxylase small subunit, chloroplastic 1.